The chain runs to 678 residues: RNA helicase NPH-II (678 aa).

One can recognise a Helicase ATP-binding domain in the interval phenylalanine 175–histidine 351. Glycine 188 to threonine 195 serves as a coordination point for ATP. Positions aspartate 300–histidine 303 match the DEXH box motif. Positions serine 371–leucine 546 constitute a Helicase C-terminal domain.

Belongs to the DEAD box helicase family. DEAH subfamily. As to quaternary structure, monomer.

It localises to the virion. The catalysed reaction is ATP + H2O = ADP + phosphate + H(+). Functionally, NTP-dependent helicase that catalyzes unidirectional unwinding of 3'tailed duplex RNAs and plays an important role during transcription of early mRNAs, presumably by preventing R-loop formation behind the elongating RNA polymerase. Might also play a role in the export of newly synthesized mRNA chains out of the core into the cytoplasm. Required for replication and propagation of viral particles. The chain is RNA helicase NPH-II (OPG084) from Oryctolagus cuniculus (Rabbit).